The primary structure comprises 131 residues: Fluoride-specific ion channel FluC 1 (131 aa).

The next 3 membrane-spanning stretches (helical) occupy residues phenylalanine 38–methionine 58, threonine 69–asparagine 89, and isoleucine 108–alanine 128. Na(+) is bound by residues glycine 79 and serine 82.

This sequence belongs to the fluoride channel Fluc/FEX (TC 1.A.43) family.

The protein localises to the cell membrane. The catalysed reaction is fluoride(in) = fluoride(out). Its activity is regulated as follows. Na(+) is not transported, but it plays an essential structural role and its presence is essential for fluoride channel function. In terms of biological role, fluoride-specific ion channel. Important for reducing fluoride concentration in the cell, thus reducing its toxicity. This chain is Fluoride-specific ion channel FluC 1, found in Bifidobacterium longum (strain NCC 2705).